A 263-amino-acid polypeptide reads, in one-letter code: Protein TILLER ANGLE CONTROL 1 (263 aa).

The short motif at 55-61 (GILAIGT) is the IGT motif element. Residues 243-263 (GKKIHPEQLNGRSNAEGPLTA) form a disordered region.

The protein belongs to the TAC family. Highly expressed in leaf sheath pulvinus. Expressed in shoot apical meristem and leaves.

Involved in the regulation of leaf growth angle. Promotes horizontal shoot growth. This is Protein TILLER ANGLE CONTROL 1 from Zea mays (Maize).